Consider the following 254-residue polypeptide: Triosephosphate isomerase (254 aa).

12-14 contacts substrate; that stretch reads NWK. His99 functions as the Electrophile in the catalytic mechanism. The active-site Proton acceptor is Glu169. Substrate contacts are provided by residues Gly175, Ser214, and 235–236; that span reads GG.

Belongs to the triosephosphate isomerase family. Homodimer.

It localises to the cytoplasm. It catalyses the reaction D-glyceraldehyde 3-phosphate = dihydroxyacetone phosphate. It functions in the pathway carbohydrate biosynthesis; gluconeogenesis. Its pathway is carbohydrate degradation; glycolysis; D-glyceraldehyde 3-phosphate from glycerone phosphate: step 1/1. Functionally, involved in the gluconeogenesis. Catalyzes stereospecifically the conversion of dihydroxyacetone phosphate (DHAP) to D-glyceraldehyde-3-phosphate (G3P). This chain is Triosephosphate isomerase, found in Bartonella tribocorum (strain CIP 105476 / IBS 506).